A 270-amino-acid chain; its full sequence is 4-hydroxy-tetrahydrodipicolinate reductase (270 aa).

Residues 11 to 16 (GASGRM) and Glu-37 each bind NAD(+). An NADP(+)-binding site is contributed by Arg-38. Residues 101-103 (GTT) and 125-128 (APNM) contribute to the NAD(+) site. His-158 serves as the catalytic Proton donor/acceptor. His-159 lines the (S)-2,3,4,5-tetrahydrodipicolinate pocket. Lys-162 serves as the catalytic Proton donor. Position 168-169 (168-169 (GT)) interacts with (S)-2,3,4,5-tetrahydrodipicolinate.

This sequence belongs to the DapB family.

The protein resides in the cytoplasm. The enzyme catalyses (S)-2,3,4,5-tetrahydrodipicolinate + NAD(+) + H2O = (2S,4S)-4-hydroxy-2,3,4,5-tetrahydrodipicolinate + NADH + H(+). It carries out the reaction (S)-2,3,4,5-tetrahydrodipicolinate + NADP(+) + H2O = (2S,4S)-4-hydroxy-2,3,4,5-tetrahydrodipicolinate + NADPH + H(+). It functions in the pathway amino-acid biosynthesis; L-lysine biosynthesis via DAP pathway; (S)-tetrahydrodipicolinate from L-aspartate: step 4/4. Catalyzes the conversion of 4-hydroxy-tetrahydrodipicolinate (HTPA) to tetrahydrodipicolinate. This chain is 4-hydroxy-tetrahydrodipicolinate reductase, found in Shewanella frigidimarina (strain NCIMB 400).